The primary structure comprises 350 residues: Sperm equatorial segment protein 1 (350 aa).

Residues Met1–Ala19 form the signal peptide. An N-linked (GlcNAc...) asparagine glycan is attached at Asn128.

It belongs to the SPESP1 family. Glycosylated. In testis there are two predominant forms of 77- and 67-kDa and a form of 47-kDa, whereas in epididymal sperm from caput, corpus, and cauda there are two forms of 47- and 43-kDa. Testis forms contain complex carbohydrate residues. Epididymal sperm forms are N-glycosylated. Then undergoes significant glycosylation in the testis and that the majority of these glycoconjugates are removed by the time sperm reach the caput epididymis. As to expression, highly expressed in testis, where it is localized in the acrosome of postmeiotic stages of spermiogenesis (round and elongating spermatids and in ejaculated spermatozoa) (at protein level). Poorly expressed in placenta and fetal lung.

It is found in the cytoplasmic vesicle. It localises to the secretory vesicle. The protein resides in the acrosome. Its function is as follows. Involved in fertilization ability of sperm. The protein is Sperm equatorial segment protein 1 of Homo sapiens (Human).